A 425-amino-acid chain; its full sequence is CDP-diacylglycerol--serine O-phosphatidyltransferase 1 (425 aa).

A compositionally biased stretch (basic and acidic residues) spans 1-16 (MEPNGYRKERRKEQHL). The tract at residues 1–23 (MEPNGYRKERRKEQHLGRMNGGG) is disordered. The next 9 membrane-spanning stretches (helical) occupy residues 42-62 (TISLLLIGACFLIWASGALDP), 79-99 (WAMIAVFLAYSLLQAPSTVLI), 105-125 (IWRLVHGMAVIYLVALTFLLF), 197-217 (PLLWVLSIGFELLEVTFRHML), 227-247 (SIVLDILICNWFGIWAGMYTV), 296-316 (FIQVLTLCIIFLTVELNTFFL), 321-341 (WIPPRNPVILYRLILWWLIAI), 361-381 (GAFCWLSLGICIVELLICIKF), and 390-410 (MPLWVVTLWGSVGLGLVAFLL).

It belongs to the CDP-alcohol phosphatidyltransferase class-I family. Expressed in trichomes, leaf veins and root vasculature.

Its subcellular location is the endoplasmic reticulum membrane. It is found in the nucleus envelope. The enzyme catalyses a CDP-1,2-diacyl-sn-glycerol + L-serine = a 1,2-diacyl-sn-glycero-3-phospho-L-serine + CMP + H(+). It functions in the pathway phospholipid metabolism; phosphatidylethanolamine biosynthesis; phosphatidylethanolamine from CDP-diacylglycerol: step 1/2. Functionally, catalyzes a base-exchange reaction in which the polar head group of phosphatidylethanolamine (PE) or phosphatidylcholine (PC) is replaced by L-serine. Is essential for phosphatidylserine (PS) biosynthesis and PE seems to be the most plausible substrate. Plays an important role in microspore maturation. This is CDP-diacylglycerol--serine O-phosphatidyltransferase 1 (PSS1) from Arabidopsis thaliana (Mouse-ear cress).